The chain runs to 709 residues: Frizzled-6 (709 aa).

The N-terminal stretch at 1-18 is a signal peptide; sequence MERSPFLLACILLPLVRG. An FZ domain is found at 19–132; the sequence is HSLFTCEPIT…CNRLPHCDDT (114 aa). Topologically, residues 19 to 201 are extracellular; sequence HSLFTCEPIT…SDELDFAKSF (183 aa). 5 disulfide bridges follow: Cys24/Cys85, Cys32/Cys78, Cys69/Cys106, Cys95/Cys129, and Cys99/Cys123. A glycan (N-linked (GlcNAc...) asparagine) is linked at Asn38. A helical membrane pass occupies residues 202–222; the sequence is IGIVSIFCLCATLFTFLTFLI. The Cytoplasmic portion of the chain corresponds to 223–233; the sequence is DVRRFRYPERP. A helical membrane pass occupies residues 234–254; it reads IIYYSVCYSIVSLMYFVGFLL. Topologically, residues 255 to 284 are extracellular; the sequence is GNSTACNKADEKLELGDTVVLGSKNKACSV. N-linked (GlcNAc...) asparagine glycosylation is present at Asn256. The chain crosses the membrane as a helical span at residues 285–305; the sequence is VFMFLYFFTMAGTVWWVILTI. Residues 306–324 lie on the Cytoplasmic side of the membrane; sequence TWFLAAGRKWSCEAIEQKA. The chain crosses the membrane as a helical span at residues 325-345; the sequence is VWFHAVAWGAPGFLTVMLLAM. Topologically, residues 346 to 370 are extracellular; that stretch reads NKVEGDNISGVCFVGLYDLDASRYF. Residue Asn352 is glycosylated (N-linked (GlcNAc...) asparagine). A helical membrane pass occupies residues 371–391; it reads VLLPLCLCVFVGLSLLLAGII. Residues 392 to 416 lie on the Cytoplasmic side of the membrane; the sequence is SLNHVRQVIQHDGRNQEKLKKFMIR. Residues 417–437 traverse the membrane as a helical segment; that stretch reads IGVFSGLYLVPLVTLLGCYVY. Topologically, residues 438 to 473 are extracellular; sequence ELVNRITWEMTWFSDHCHQYRIPCPYQANPKARPEL. Residues 474-494 form a helical membrane-spanning segment; sequence ALFMIKYLMTLIVGISAVFWV. Topologically, residues 495–709 are cytoplasmic; it reads GSKKTCTEWA…EQGAGSHSDA (215 aa). A Lys-Thr-X-X-X-Trp motif, mediates interaction with the PDZ domain of Dvl family members motif is present at residues 498–503; it reads KTCTEW. Over residues 583–594 the composition is skewed to polar residues; the sequence is QETSTEVHTSPE. Positions 583–709 are disordered; it reads QETSTEVHTS…EQGAGSHSDA (127 aa). Residues 596–616 show a composition bias toward basic and acidic residues; that stretch reads SVKEGRADRANTPSAKDRDCG. Positions 620–629 are enriched in polar residues; sequence GPSSKLSGNR. The span at 630–644 shows a compositional bias: basic and acidic residues; it reads NGRESRAGGLKERSN. Ser656 is modified (phosphoserine). Positions 669–690 are enriched in polar residues; sequence CSTSQAASSPEPTSLKGSTSLP. A compositionally biased stretch (basic and acidic residues) spans 697–709; the sequence is ARKEQGAGSHSDA.

This sequence belongs to the G-protein coupled receptor Fz/Smo family. As to quaternary structure, interacts with LMBR1L. In terms of processing, ubiquitinated by ZNRF3, leading to its degradation by the proteasome. In terms of tissue distribution, expressed in both hair cells and supporting cells in the utricle, saccule, cristae and the organ of Corti in the inner ear (at protein level).

Its subcellular location is the membrane. It is found in the cell membrane. It localises to the cell surface. The protein resides in the apical cell membrane. The protein localises to the cytoplasmic vesicle membrane. Its subcellular location is the endoplasmic reticulum membrane. In terms of biological role, receptor for Wnt proteins. Most of frizzled receptors are coupled to the beta-catenin canonical signaling pathway, which leads to the activation of disheveled proteins, inhibition of GSK-3 kinase, nuclear accumulation of beta-catenin and activation of Wnt target genes. A second signaling pathway involving PKC and calcium fluxes has been seen for some family members, but it is not yet clear if it represents a distinct pathway or if it can be integrated in the canonical pathway, as PKC seems to be required for Wnt-mediated inactivation of GSK-3 kinase. Both pathways seem to involve interactions with G-proteins. Activation by Wnt5A stimulates PKC activity via a G-protein-dependent mechanism. Involved in transduction and intercellular transmission of polarity information during tissue morphogenesis and/or in differentiated tissues. Together with FZD3, is involved in the neural tube closure and plays a role in the regulation of the establishment of planar cell polarity (PCP), particularly in the orientation of asymmetric bundles of stereocilia on the apical faces of a subset of auditory and vestibular sensory cells located in the inner ear. This Mus musculus (Mouse) protein is Frizzled-6 (Fzd6).